A 663-amino-acid chain; its full sequence is UvrABC system protein B (663 aa).

Over residues 1 to 10 (MIDKRDDKPF) the composition is skewed to basic and acidic residues. The disordered stretch occupies residues 1–23 (MIDKRDDKPFKLKSKYKPSGDQP). A Helicase ATP-binding domain is found at 31 to 271 (DNIEGGEKAQ…EQSIAKIQAE (241 aa)). 44–51 (GATGTGKT) contributes to the ATP binding site. A Beta-hairpin motif is present at residues 97 to 120 (YYDYYQPEAYVPSSDTYIEKDSSV). One can recognise a Helicase C-terminal domain in the interval 435–601 (QIDDLLGEIN…TIKKDIRGLI (167 aa)). The region spanning 627-662 (KEAINALQKQMQEAAELLDFELAAQMRDLILELKLM) is the UVR domain.

The protein belongs to the UvrB family. In terms of assembly, forms a heterotetramer with UvrA during the search for lesions. Interacts with UvrC in an incision complex.

Its subcellular location is the cytoplasm. Functionally, the UvrABC repair system catalyzes the recognition and processing of DNA lesions. A damage recognition complex composed of 2 UvrA and 2 UvrB subunits scans DNA for abnormalities. Upon binding of the UvrA(2)B(2) complex to a putative damaged site, the DNA wraps around one UvrB monomer. DNA wrap is dependent on ATP binding by UvrB and probably causes local melting of the DNA helix, facilitating insertion of UvrB beta-hairpin between the DNA strands. Then UvrB probes one DNA strand for the presence of a lesion. If a lesion is found the UvrA subunits dissociate and the UvrB-DNA preincision complex is formed. This complex is subsequently bound by UvrC and the second UvrB is released. If no lesion is found, the DNA wraps around the other UvrB subunit that will check the other stand for damage. The polypeptide is UvrABC system protein B (Streptococcus pyogenes serotype M5 (strain Manfredo)).